The chain runs to 170 residues: Adenine phosphoribosyltransferase (170 aa).

Belongs to the purine/pyrimidine phosphoribosyltransferase family. As to quaternary structure, homodimer.

Its subcellular location is the cytoplasm. The catalysed reaction is AMP + diphosphate = 5-phospho-alpha-D-ribose 1-diphosphate + adenine. It participates in purine metabolism; AMP biosynthesis via salvage pathway; AMP from adenine: step 1/1. Its function is as follows. Catalyzes a salvage reaction resulting in the formation of AMP, that is energically less costly than de novo synthesis. This is Adenine phosphoribosyltransferase from Trichodesmium erythraeum (strain IMS101).